A 612-amino-acid chain; its full sequence is MPEYRSKTSTHGRNMAGARALWRATGMKDGDFHKPIIAIANSFTQFVPGHVHLKDLGQLVAREIERVGGVAKEFDTIAVDDGIAMGHDGMLYSLPSREIIADSVEYMVNAHCADALVCISNCDKITPGMLMAALRLNIPTVFVSGGPMEAGKTKLADHNLDLIDAMVIAADDSASDEKVAEFERSACPTCGSCSGMFTANSMNCLTEALGLSLPGNGTVVATHADREQLFLRAGRVAVELCHRWYGGEDPTALPRGIATFEAFENAMTLDIAMGGSTNTILHLLAAAQEGEVPFGMRDIDRLSKRVPQLCKVAPNTPKYHIEDVHRAGGIMSILGELARGGLLHTNAATVHTRTLADAIAQWDVTQVDDDKVHTFYKAGPAGIPTQIAFSQATRWDTLDTDRSEGCIRDVAHAFSQEGGLAVLYGNIARDGCVVKTAGVDESIHVFEGNARVYESQDSAVKGILADEVKAGDVVVIRYEGPKGGPGMQEMLYPTSYLKSKGLGKHCALLTDGRFSGGTSGLSIGHASPEAAAGGAIGLVRNGDKILIDIPKRSIDLLVSDEELAARRTEQDAKGWKPVEVRPRKVTTALKAYALLATSADKGAVRDKAMLDG.

Aspartate 81 is a Mg(2+) binding site. Residue cysteine 122 participates in [2Fe-2S] cluster binding. Aspartate 123 and lysine 124 together coordinate Mg(2+). At lysine 124 the chain carries N6-carboxylysine. Cysteine 193 contacts [2Fe-2S] cluster. Residue glutamate 489 coordinates Mg(2+). The active-site Proton acceptor is serine 515.

This sequence belongs to the IlvD/Edd family. Homodimer. [2Fe-2S] cluster is required as a cofactor. Mg(2+) serves as cofactor.

The enzyme catalyses (2R)-2,3-dihydroxy-3-methylbutanoate = 3-methyl-2-oxobutanoate + H2O. It catalyses the reaction (2R,3R)-2,3-dihydroxy-3-methylpentanoate = (S)-3-methyl-2-oxopentanoate + H2O. Its pathway is amino-acid biosynthesis; L-isoleucine biosynthesis; L-isoleucine from 2-oxobutanoate: step 3/4. It functions in the pathway amino-acid biosynthesis; L-valine biosynthesis; L-valine from pyruvate: step 3/4. In terms of biological role, functions in the biosynthesis of branched-chain amino acids. Catalyzes the dehydration of (2R,3R)-2,3-dihydroxy-3-methylpentanoate (2,3-dihydroxy-3-methylvalerate) into 2-oxo-3-methylpentanoate (2-oxo-3-methylvalerate) and of (2R)-2,3-dihydroxy-3-methylbutanoate (2,3-dihydroxyisovalerate) into 2-oxo-3-methylbutanoate (2-oxoisovalerate), the penultimate precursor to L-isoleucine and L-valine, respectively. In Xanthomonas campestris pv. campestris (strain B100), this protein is Dihydroxy-acid dehydratase.